We begin with the raw amino-acid sequence, 396 residues long: Dimethyladenosine transferase 2, mitochondrial (396 aa).

A mitochondrion-targeting transit peptide spans 1-19; sequence MWIPVVGLPRRLRLSALAG. Residues 44-64 form a disordered region; sequence LSDSSPQLWPEPDFRNPPRKA. Residues valine 75, glutamate 124, and aspartate 150 each contribute to the S-adenosyl-L-methionine site. The segment at 330-331 is DNA-binding; that stretch reads RR.

The protein belongs to the class I-like SAM-binding methyltransferase superfamily. rRNA adenine N(6)-methyltransferase family. KsgA subfamily. As to quaternary structure, homodimer. Component of the mitochondrial transcription initiation complex, composed at least of TFB2M, TFAM and POLRMT. In this complex TFAM recruits POLRMT to the promoter whereas TFB2M induces structural changes in POLRMT to enable promoter opening and trapping of the DNA non-template strand. Interacts with mitochondrial RNA polymerase POLRMT. Interacts with TFAM. Ubiquitously expressed.

Its subcellular location is the mitochondrion. It catalyses the reaction adenosine in rRNA + S-adenosyl-L-methionine = N(6)-methyladenosine in rRNA + S-adenosyl-L-homocysteine + H(+). Its function is as follows. S-adenosyl-L-methionine-dependent rRNA methyltransferase which may methylate two specific adjacent adenosines in the loop of a conserved hairpin near the 3'-end of 12S mitochondrial rRNA. Component of the mitochondrial transcription initiation complex, composed at least of TFB2M, TFAM and POLRMT that is required for basal transcription of mitochondrial DNA. In this complex, TFAM recruits POLRMT to a specific promoter whereas TFB2M induces structural changes in POLRMT to enable promoter opening and trapping of the DNA non-template strand. Stimulates transcription independently of the methyltransferase activity. This Homo sapiens (Human) protein is Dimethyladenosine transferase 2, mitochondrial.